Here is a 416-residue protein sequence, read N- to C-terminus: Isobutyryl-CoA dehydrogenase, mitochondrial (416 aa).

The transit peptide at 1 to 23 directs the protein to the mitochondrion; sequence MMLRGGCQRVGARLRGLRRGPRG. K51 is modified (N6-acetyllysine; alternate). K51 is subject to N6-succinyllysine; alternate. FAD is bound by residues 159–168 and 192–194; these read YCLTEPGSGS and FIS. S168 lines the substrate pocket. K232 is modified (N6-acetyllysine). K272 bears the N6-succinyllysine mark. 275–278 contacts substrate; the sequence is NGGR. FAD is bound by residues R303, 313–314, and 372–376; these read SQ and QMHGG. E399 (proton acceptor) is an active-site residue. 401-403 contacts FAD; that stretch reads SNE. R411 contributes to the substrate binding site.

The protein belongs to the acyl-CoA dehydrogenase family. As to quaternary structure, homotetramer, formed by a dimer of dimers. Requires FAD as cofactor.

Its subcellular location is the mitochondrion. The enzyme catalyses 2-methylpropanoyl-CoA + oxidized [electron-transfer flavoprotein] + H(+) = 2-methylpropenoyl-CoA + reduced [electron-transfer flavoprotein]. It catalyses the reaction (2S)-2-methylbutanoyl-CoA + oxidized [electron-transfer flavoprotein] + H(+) = (2E)-2-methylbut-2-enoyl-CoA + reduced [electron-transfer flavoprotein]. It carries out the reaction propanoyl-CoA + oxidized [electron-transfer flavoprotein] + H(+) = acryloyl-CoA + reduced [electron-transfer flavoprotein]. Its pathway is amino-acid degradation; L-valine degradation. Its function is as follows. Isobutyryl-CoA dehydrogenase which catalyzes the conversion of 2-methylpropanoyl-CoA to (2E)-2-methylpropenoyl-CoA in the valine catabolic pathway. To a lesser extent, also able to catalyze the oxidation of (2S)-2-methylbutanoyl-CoA. In Bos taurus (Bovine), this protein is Isobutyryl-CoA dehydrogenase, mitochondrial (ACAD8).